A 172-amino-acid chain; its full sequence is Large ribosomal subunit protein uL10 (172 aa).

The protein belongs to the universal ribosomal protein uL10 family. Part of the ribosomal stalk of the 50S ribosomal subunit. The N-terminus interacts with L11 and the large rRNA to form the base of the stalk. The C-terminus forms an elongated spine to which L12 dimers bind in a sequential fashion forming a multimeric L10(L12)X complex.

Forms part of the ribosomal stalk, playing a central role in the interaction of the ribosome with GTP-bound translation factors. In Rhizobium leguminosarum bv. trifolii (strain WSM2304), this protein is Large ribosomal subunit protein uL10.